The chain runs to 101 residues: Small ribosomal subunit protein uS14 (101 aa).

It belongs to the universal ribosomal protein uS14 family. Part of the 30S ribosomal subunit. Contacts proteins S3 and S10.

In terms of biological role, binds 16S rRNA, required for the assembly of 30S particles and may also be responsible for determining the conformation of the 16S rRNA at the A site. This is Small ribosomal subunit protein uS14 from Erythrobacter litoralis (strain HTCC2594).